A 559-amino-acid chain; its full sequence is Nucleolar protein 12 (559 aa).

The interval 24-194 (ASSAGPVQAP…AGNESDIPVH (171 aa)) is disordered. Residues 44–56 (QKVREPAKPKVHL) show a composition bias toward basic and acidic residues. The segment covering 57–110 (EEDDEVLSEISEELSFEEDGPSDEDEDEDEDEENSEQEDGSGDEQEEEESEDVD) has biased composition (acidic residues). Over residues 141–180 (NDNDDLEGKYLDKVAAEEEADRAGKRQKNDALTKTEKPAV) the composition is skewed to basic and acidic residues. RRM domains follow at residues 211-320 (RTVF…SVAH) and 328-432 (RCVF…RAKD). The disordered stretch occupies residues 429 to 559 (RAKDPRKTAL…RASEWKKKKN (131 aa)). Basic and acidic residues-rich tracts occupy residues 516 to 532 (EGRRASARDGLPKDLKQ) and 550 to 559 (RASEWKKKKN).

Belongs to the RRM RBM34 family.

The protein localises to the nucleus. Its subcellular location is the nucleolus. In terms of biological role, involved in pre-25S rRNA processing. This is Nucleolar protein 12 (NOP12) from Gibberella zeae (strain ATCC MYA-4620 / CBS 123657 / FGSC 9075 / NRRL 31084 / PH-1) (Wheat head blight fungus).